Consider the following 377-residue polypeptide: Succinyl-diaminopimelate desuccinylase (377 aa).

Zn(2+) is bound at residue histidine 75. Residue aspartate 77 is part of the active site. Position 106 (aspartate 106) interacts with Zn(2+). The active-site Proton acceptor is the glutamate 136. Zn(2+)-binding residues include glutamate 137, glutamate 165, and histidine 350.

It belongs to the peptidase M20A family. DapE subfamily. Homodimer. Zn(2+) is required as a cofactor. The cofactor is Co(2+).

The catalysed reaction is N-succinyl-(2S,6S)-2,6-diaminopimelate + H2O = (2S,6S)-2,6-diaminopimelate + succinate. It participates in amino-acid biosynthesis; L-lysine biosynthesis via DAP pathway; LL-2,6-diaminopimelate from (S)-tetrahydrodipicolinate (succinylase route): step 3/3. Functionally, catalyzes the hydrolysis of N-succinyl-L,L-diaminopimelic acid (SDAP), forming succinate and LL-2,6-diaminopimelate (DAP), an intermediate involved in the bacterial biosynthesis of lysine and meso-diaminopimelic acid, an essential component of bacterial cell walls. This is Succinyl-diaminopimelate desuccinylase from Sphingopyxis alaskensis (strain DSM 13593 / LMG 18877 / RB2256) (Sphingomonas alaskensis).